The following is a 270-amino-acid chain: Putative pyruvate, phosphate dikinase regulatory protein (270 aa).

G148 to T155 is an ADP binding site.

It belongs to the pyruvate, phosphate/water dikinase regulatory protein family. PDRP subfamily.

The enzyme catalyses N(tele)-phospho-L-histidyl/L-threonyl-[pyruvate, phosphate dikinase] + ADP = N(tele)-phospho-L-histidyl/O-phospho-L-threonyl-[pyruvate, phosphate dikinase] + AMP + H(+). It carries out the reaction N(tele)-phospho-L-histidyl/O-phospho-L-threonyl-[pyruvate, phosphate dikinase] + phosphate + H(+) = N(tele)-phospho-L-histidyl/L-threonyl-[pyruvate, phosphate dikinase] + diphosphate. Its function is as follows. Bifunctional serine/threonine kinase and phosphorylase involved in the regulation of the pyruvate, phosphate dikinase (PPDK) by catalyzing its phosphorylation/dephosphorylation. This chain is Putative pyruvate, phosphate dikinase regulatory protein, found in Bacillus cereus (strain AH187).